Reading from the N-terminus, the 261-residue chain is Acetylglutamate kinase (261 aa).

Residues 41-42 (GG), arginine 63, and asparagine 157 contribute to the substrate site.

It belongs to the acetylglutamate kinase family. ArgB subfamily.

The protein resides in the cytoplasm. The catalysed reaction is N-acetyl-L-glutamate + ATP = N-acetyl-L-glutamyl 5-phosphate + ADP. Its pathway is amino-acid biosynthesis; L-arginine biosynthesis; N(2)-acetyl-L-ornithine from L-glutamate: step 2/4. Functionally, catalyzes the ATP-dependent phosphorylation of N-acetyl-L-glutamate. This Koribacter versatilis (strain Ellin345) protein is Acetylglutamate kinase.